Here is a 970-residue protein sequence, read N- to C-terminus: Type III restriction-modification enzyme EcoPI Res subunit (970 aa).

Positions 75-540 are helicase-like domain; that stretch reads ARSNVIDVSM…EVGRGLRLPV (466 aa). An endonuclease domain region spans residues 894-918; sequence TYSPDFAYVVKTAEGDYLNFIIETK.

Belongs to the type III restriction-modification system Res protein family. In terms of assembly, a heterotetramer with stoichiometry Res(2)Mod(2). It depends on Mg(2+) as a cofactor. Requires S-adenosyl-L-methionine as cofactor.

It catalyses the reaction Endonucleolytic cleavage of DNA to give specific double-stranded fragments with terminal 5'-phosphates.. Its function is as follows. A type III restriction enzyme that recognizes 2 inversely oriented double-stranded sequences 5'-AGACC-3' and cleaves DNA 25-27 base pairs downstream of one site, producing a single-strand 5' protrusion of two nucleotides. DNA restriction requires both the Res and Mod subunits. DNA topology affects its action; relaxed and negatively supercoiled DNA are digested but positively supercoiled DNA is not a good substrate. After binding to one recognition site undergoes random one-dimensional diffusion along DNA until it collides with a stationary enzyme bound to the second DNA site, which is when DNA cleavage occurs. This chain is Type III restriction-modification enzyme EcoPI Res subunit, found in Enterobacteriaceae (Bacteriophage P1).